The sequence spans 165 residues: UPF0303 protein Bphyt_1734 (165 aa).

Belongs to the UPF0303 family.

The protein is UPF0303 protein Bphyt_1734 of Paraburkholderia phytofirmans (strain DSM 17436 / LMG 22146 / PsJN) (Burkholderia phytofirmans).